Reading from the N-terminus, the 278-residue chain is MTKSFTKYHGLGNDFILIDNRHQLQPILTPEQAIELCDRNFGIGADGVIFALPGVKQTDYTMRIFNSDGSEPEMCGNGIRCLAKFIAELENNNKTKYNIHTGAGIIVPELQGDGQVTVDMGQPRLLASEIPTTLANADDKVVDQLLEVGGKSWFVTCVSMGNPHCITFVEDVTAIDLAKIGPKFEHNPVFPERTNTEFIQVISPKYVKMRVWERGAGATLACGTGACASVVAGVLTQNNERLVTVELPGGCLEIEWSTIDQKIYMTGPAEKVFTGIIA.

Substrate-binding residues include Asn-13 and Asn-66. The active-site Proton donor is Cys-75. Residues 76-77 (GN), Asn-162, Asn-195, and 213-214 (ER) contribute to the substrate site. Cys-222 acts as the Proton acceptor in catalysis. 223–224 (GT) provides a ligand contact to substrate.

This sequence belongs to the diaminopimelate epimerase family. Homodimer.

It is found in the cytoplasm. The catalysed reaction is (2S,6S)-2,6-diaminopimelate = meso-2,6-diaminopimelate. It participates in amino-acid biosynthesis; L-lysine biosynthesis via DAP pathway; DL-2,6-diaminopimelate from LL-2,6-diaminopimelate: step 1/1. Its function is as follows. Catalyzes the stereoinversion of LL-2,6-diaminopimelate (L,L-DAP) to meso-diaminopimelate (meso-DAP), a precursor of L-lysine and an essential component of the bacterial peptidoglycan. The protein is Diaminopimelate epimerase of Trichodesmium erythraeum (strain IMS101).